A 331-amino-acid chain; its full sequence is Ketol-acid reductoisomerase (NADP(+)) (331 aa).

In terms of domain architecture, KARI N-terminal Rossmann spans 2 to 182 (ARMYYDEDAN…GGTRGGVLET (181 aa)). Residues 25 to 28 (YGSQ), Ser51, Ser53, and 83 to 86 (DEVQ) contribute to the NADP(+) site. His108 is an active-site residue. Gly134 provides a ligand contact to NADP(+). The KARI C-terminal knotted domain maps to 183-328 (TFREETETDL…KDLRAMFSWL (146 aa)). Mg(2+)-binding residues include Asp191, Glu195, Glu227, and Glu231. Ser252 serves as a coordination point for substrate.

This sequence belongs to the ketol-acid reductoisomerase family. Mg(2+) serves as cofactor.

The enzyme catalyses (2R)-2,3-dihydroxy-3-methylbutanoate + NADP(+) = (2S)-2-acetolactate + NADPH + H(+). It carries out the reaction (2R,3R)-2,3-dihydroxy-3-methylpentanoate + NADP(+) = (S)-2-ethyl-2-hydroxy-3-oxobutanoate + NADPH + H(+). It participates in amino-acid biosynthesis; L-isoleucine biosynthesis; L-isoleucine from 2-oxobutanoate: step 2/4. The protein operates within amino-acid biosynthesis; L-valine biosynthesis; L-valine from pyruvate: step 2/4. Its function is as follows. Involved in the biosynthesis of branched-chain amino acids (BCAA). Catalyzes an alkyl-migration followed by a ketol-acid reduction of (S)-2-acetolactate (S2AL) to yield (R)-2,3-dihydroxy-isovalerate. In the isomerase reaction, S2AL is rearranged via a Mg-dependent methyl migration to produce 3-hydroxy-3-methyl-2-ketobutyrate (HMKB). In the reductase reaction, this 2-ketoacid undergoes a metal-dependent reduction by NADPH to yield (R)-2,3-dihydroxy-isovalerate. In Trichormus variabilis (strain ATCC 29413 / PCC 7937) (Anabaena variabilis), this protein is Ketol-acid reductoisomerase (NADP(+)).